A 154-amino-acid polypeptide reads, in one-letter code: Prefoldin subunit 5 (154 aa).

The residue at position 2 (A2) is an N-acetylalanine. Position 42 is an N6-acetyllysine (K42). Position 56 is a phosphoserine (S56).

The protein belongs to the prefoldin subunit alpha family. Heterohexamer of two PFD-alpha type and four PFD-beta type subunits.

The protein localises to the nucleus. Its function is as follows. Binds specifically to cytosolic chaperonin (c-CPN) and transfers target proteins to it. Binds to nascent polypeptide chain and promotes folding in an environment in which there are many competing pathways for nonnative proteins. Represses the transcriptional activity of MYC. This chain is Prefoldin subunit 5 (Pfdn5), found in Mus musculus (Mouse).